Here is a 969-residue protein sequence, read N- to C-terminus: Isoleucine--tRNA ligase (969 aa).

The short motif at P68 to H78 is the 'HIGH' region element. An L-isoleucyl-5'-AMP-binding site is contributed by E585. The 'KMSKS' region signature appears at K626–S630. Residue K629 participates in ATP binding. 4 residues coordinate Zn(2+): C939, C942, C959, and C962.

This sequence belongs to the class-I aminoacyl-tRNA synthetase family. IleS type 1 subfamily. As to quaternary structure, monomer. Zn(2+) is required as a cofactor.

The protein resides in the cytoplasm. It catalyses the reaction tRNA(Ile) + L-isoleucine + ATP = L-isoleucyl-tRNA(Ile) + AMP + diphosphate. Catalyzes the attachment of isoleucine to tRNA(Ile). As IleRS can inadvertently accommodate and process structurally similar amino acids such as valine, to avoid such errors it has two additional distinct tRNA(Ile)-dependent editing activities. One activity is designated as 'pretransfer' editing and involves the hydrolysis of activated Val-AMP. The other activity is designated 'posttransfer' editing and involves deacylation of mischarged Val-tRNA(Ile). The protein is Isoleucine--tRNA ligase of Prochlorococcus marinus (strain MIT 9211).